The chain runs to 183 residues: Capsid protein (183 aa).

The disordered stretch occupies residues 136-183 (NAPILSTLPETTVVRRRGRSPRRRTPSPRRRRSQSPRRRRSQSRESQC). Positions 149-176 (VRRRGRSPRRRTPSPRRRRSQSPRRRRS) are enriched in basic residues. A phosphoserine; by host mark is found at Ser155, Ser162, and Ser170. A 1; half-length repeat occupies 155-161 (SPRRRTP). A 3 X 8 AA repeats of S-P-R-R-R-[PR]-S-Q region spans residues 155-177 (SPRRRTPSPRRRRSQSPRRRRSQ). Positions 158–175 (RRTPSPRRRRSQSPRRRR) match the Bipartite nuclear localization signal motif. 2 tandem repeats follow at residues 162-169 (SPRRRRSQ) and 170-177 (SPRRRRSQ). The RNA binding stretch occupies residues 177-183 (QSRESQC).

The protein belongs to the orthohepadnavirus core antigen family. As to quaternary structure, homodimerizes, then multimerizes. Interacts with cytosol exposed regions of viral L glycoprotein present in the reticulum-to-Golgi compartment. Interacts with human FLNB. Phosphorylated form interacts with host importin alpha; this interaction depends on the exposure of the NLS, which itself depends upon genome maturation and/or phosphorylation of the capsid protein. Interacts with host NUP153. In terms of processing, phosphorylated by host SRPK1, SRPK2, and maybe protein kinase C or GAPDH. Phosphorylation is critical for pregenomic RNA packaging. Protein kinase C phosphorylation is stimulated by HBx protein and may play a role in transport of the viral genome to the nucleus at the late step during the viral replication cycle.

Its subcellular location is the virion. It is found in the host cytoplasm. Self assembles to form an icosahedral capsid. Most capsids appear to be large particles with an icosahedral symmetry of T=4 and consist of 240 copies of capsid protein, though a fraction forms smaller T=3 particles consisting of 180 capsid proteins. Entering capsids are transported along microtubules to the nucleus. Phosphorylation of the capsid is thought to induce exposure of nuclear localization signal in the C-terminal portion of the capsid protein that allows binding to the nuclear pore complex via the importin (karyopherin-) alpha and beta. Capsids are imported in intact form through the nuclear pore into the nuclear basket, where it probably binds NUP153. Only capsids that contain the mature viral genome can release the viral DNA and capsid protein into the nucleoplasm. Immature capsids get stuck in the basket. Capsids encapsulate the pre-genomic RNA and the P protein. Pre-genomic RNA is reverse-transcribed into DNA while the capsid is still in the cytoplasm. The capsid can then either be directed to the nucleus, providing more genomes for transcription, or bud through the endoplasmic reticulum to provide new virions. The protein is Capsid protein of Homo sapiens (Human).